We begin with the raw amino-acid sequence, 185 residues long: Intraflagellar transport protein 22 homolog (185 aa).

GTP is bound by residues 10 to 17 (GPCESGKT), 63 to 67 (DCGGD), and 123 to 126 (HKPG).

The protein belongs to the small GTPase superfamily. Rab family. Component of the IFT complex B, at least composed of IFT20, IFT22, IFT25, IFT27, IFT46, IFT52, TRAF3IP1/IFT54, IFT57, IFT74, IFT80, IFT81, and IFT88. Interacts with IFT88. Interacts with CFAP61.

Its subcellular location is the cell projection. It is found in the cilium. Its function is as follows. Small GTPase-like component of the intraflagellar transport (IFT) complex B. The polypeptide is Intraflagellar transport protein 22 homolog (IFT22) (Bos taurus (Bovine)).